The chain runs to 121 residues: Neuromedin-B (121 aa).

The N-terminal stretch at 1-24 (MTRQAGSSWLLRGLLLFALFASGV) is a signal peptide. Methionine amide is present on methionine 56. Residues 60-121 (SLEPPSLSLV…RRLLEPLLQK (62 aa)) constitute a propeptide that is removed on maturation.

The protein belongs to the bombesin/neuromedin-B/ranatensin family. In the hindbrain, expressed in the medulla surrounding the lateral half of the facial nucleus. Also expressed in the olfactory bulb and hippocampus. Detected in a subset of neurons distributed throughout the retrotrapezoid nucleus/parafacial respiratory group (RTN/pFRG). Within the RTN/pFRG, expressed in neuronal subpopulations distinct from those expressing Grp. Expressed in lung.

It is found in the secreted. The protein localises to the cell projection. The protein resides in the neuron projection. Its function is as follows. Stimulates smooth muscle contraction. Induces sighing by acting directly on the pre-Botzinger complex, a cluster of several thousand neurons in the ventrolateral medulla responsible for inspiration during respiratory activity. Contributes to the induction of sneezing following exposure to chemical irritants or allergens which causes release of NMB by nasal sensory neurons and activation of NMBR-expressing neurons in the sneeze-evoking region of the brainstem. These in turn activate neurons of the caudal ventral respiratory group, giving rise to the sneeze reflex. Contributes to induction of acute itch, possibly through activation of the NMBR receptor on dorsal root ganglion neurons. Increases expression of NMBR and steroidogenic mediators STAR, CYP11A1 and HSD3B1 in Leydig cells, induces secretion of testosterone by Leydig cells and also promotes Leydig cell proliferation. Plays a role in the innate immune response to influenza A virus infection by enhancing interferon alpha expression and reducing expression of IL6. Plays a role in CSF1-induced proliferation of osteoclast precursors by contributing to the positive regulation of the expression of the CSF1 receptor CSF1R. In Mus musculus (Mouse), this protein is Neuromedin-B (Nmb).